The following is a 228-amino-acid chain: C-type lectin domain-containing protein 88 (228 aa).

An N-terminal signal peptide occupies residues 1–18 (MQFIFFGTLFSGLLLVCA). Ser27 carries O-linked (Xyl...) (chondroitin sulfate) serine glycosylation. In terms of domain architecture, C-type lectin spans 88–218 (YSDSCYWVET…CTYLFYSICE (131 aa)). Disulfide bonds link Cys109-Cys217 and Cys188-Cys209. N-linked (GlcNAc...) asparagine glycosylation occurs at Asn220.

The sequence is that of C-type lectin domain-containing protein 88 from Caenorhabditis elegans.